A 465-amino-acid chain; its full sequence is Sodium-dependent phosphate transport protein 1 (465 aa).

N-linked (GlcNAc...) asparagine glycans are attached at residues asparagine 39, asparagine 47, and asparagine 56. The next 10 membrane-spanning stretches (helical) occupy residues 79–99 (GLVL…VGYL), 117–137 (SVLS…VIVC), 176–196 (FVMG…LLGW), 199–219 (VFYI…ILLF), 260–280 (LPLW…NLLV), 299–319 (GLLS…AGQM), 337–357 (LFTT…LYLS), 363–383 (TVIF…GQLI), 399–419 (VTAL…GLIL), and 431–451 (FFLM…FAKG).

This sequence belongs to the major facilitator superfamily. Sodium/anion cotransporter family. Interacts with PDZK1.

The protein resides in the apical cell membrane. The enzyme catalyses 3 Na(+)(out) + phosphate(out) = 3 Na(+)(in) + phosphate(in). It catalyses the reaction urate(out) = urate(in). Functionally, important for the resorption of phosphate by the kidney. May be involved in actively transporting phosphate into cells via Na(+) cotransport in the renal brush border membrane. Plays a role in urate transport in the kidney. This chain is Sodium-dependent phosphate transport protein 1 (Slc17a1), found in Rattus norvegicus (Rat).